Reading from the N-terminus, the 132-residue chain is uncharacterized protein (132 aa).

Residues 1 to 18 (MRKIISMLFIPLFIFAMA) form the signal peptide.

This is an uncharacterized protein from Aquifex aeolicus (strain VF5).